A 258-amino-acid chain; its full sequence is MSDTLYWHVSGQGPDLVLVHGWGMNGAVWQQTVDALEADFRVHVVDLPGYGHSAHCHAQDLEEIAQQLLAEAPKRAIWVGWSLGGLVATHMALHHSDYVSKLVTVASSPKFAAAKEPVLWRGIQPNVLSAFTEQLVEDFQTTIERFMALQAMGSPSARQDVKQLKQAVLSRPLPNPDSLLAGLKMLSDVDLREQLPEISVPMLRLYGRLDGLVPIKVAKDLGRALPHTEQYIFTQSSHAPFMTEADAFCSELVSFAQK.

Residues 16–244 (LVLVHGWGMN…QSSHAPFMTE (229 aa)) form the AB hydrolase-1 domain. Substrate contacts are provided by residues W22, 82-83 (SL), and 146-150 (FMALQ). The active-site Nucleophile is the S82. Catalysis depends on residues D210 and H238. H238 is a substrate binding site.

This sequence belongs to the AB hydrolase superfamily. Carboxylesterase BioH family. As to quaternary structure, monomer.

The protein localises to the cytoplasm. The enzyme catalyses 6-carboxyhexanoyl-[ACP] methyl ester + H2O = 6-carboxyhexanoyl-[ACP] + methanol + H(+). The protein operates within cofactor biosynthesis; biotin biosynthesis. Functionally, the physiological role of BioH is to remove the methyl group introduced by BioC when the pimeloyl moiety is complete. It allows to synthesize pimeloyl-ACP via the fatty acid synthetic pathway through the hydrolysis of the ester bonds of pimeloyl-ACP esters. This is Pimeloyl-[acyl-carrier protein] methyl ester esterase from Vibrio atlanticus (strain LGP32) (Vibrio splendidus (strain Mel32)).